A 472-amino-acid polypeptide reads, in one-letter code: Pyridine nucleotide-disulfide oxidoreductase domain-containing protein 1 (472 aa).

The protein belongs to the class-I pyridine nucleotide-disulfide oxidoreductase family. PYROXD1 subfamily. FAD is required as a cofactor.

Its function is as follows. Probable oxidoreductase. The sequence is that of Pyridine nucleotide-disulfide oxidoreductase domain-containing protein 1 from Drosophila melanogaster (Fruit fly).